The primary structure comprises 157 residues: Ribosome maturation factor RimP (157 aa).

The protein belongs to the RimP family.

It localises to the cytoplasm. Required for maturation of 30S ribosomal subunits. In Ligilactobacillus salivarius (strain UCC118) (Lactobacillus salivarius), this protein is Ribosome maturation factor RimP.